The following is a 122-amino-acid chain: Large ribosomal subunit protein uL18 (122 aa).

Residues 1–25 (MSQISRKQQTQKRHRRLRRHITGTS) form a disordered region. Residues 9-21 (QTQKRHRRLRRHI) are compositionally biased toward basic residues.

The protein belongs to the universal ribosomal protein uL18 family. As to quaternary structure, part of the 50S ribosomal subunit; part of the 5S rRNA/L5/L18/L25 subcomplex. Contacts the 5S and 23S rRNAs.

In terms of biological role, this is one of the proteins that bind and probably mediate the attachment of the 5S RNA into the large ribosomal subunit, where it forms part of the central protuberance. This chain is Large ribosomal subunit protein uL18, found in Synechococcus sp. (strain CC9605).